Consider the following 668-residue polypeptide: tRNA 5-methylaminomethyl-2-thiouridine biosynthesis bifunctional protein MnmC (668 aa).

A tRNA (mnm(5)s(2)U34)-methyltransferase region spans residues 1–245 (MKHYSIQPAN…KREMLCGVME (245 aa)). The segment at 270–668 (IGGGIASALL…LLKGKAVKAG (399 aa)) is FAD-dependent cmnm(5)s(2)U34 oxidoreductase.

The protein in the N-terminal section; belongs to the methyltransferase superfamily. tRNA (mnm(5)s(2)U34)-methyltransferase family. This sequence in the C-terminal section; belongs to the DAO family. The cofactor is FAD.

The protein resides in the cytoplasm. The catalysed reaction is 5-aminomethyl-2-thiouridine(34) in tRNA + S-adenosyl-L-methionine = 5-methylaminomethyl-2-thiouridine(34) in tRNA + S-adenosyl-L-homocysteine + H(+). Functionally, catalyzes the last two steps in the biosynthesis of 5-methylaminomethyl-2-thiouridine (mnm(5)s(2)U) at the wobble position (U34) in tRNA. Catalyzes the FAD-dependent demodification of cmnm(5)s(2)U34 to nm(5)s(2)U34, followed by the transfer of a methyl group from S-adenosyl-L-methionine to nm(5)s(2)U34, to form mnm(5)s(2)U34. In Escherichia coli O9:H4 (strain HS), this protein is tRNA 5-methylaminomethyl-2-thiouridine biosynthesis bifunctional protein MnmC.